A 331-amino-acid chain; its full sequence is Adenosine deaminase (331 aa).

Positions 12 and 14 each coordinate Zn(2+). The substrate site is built by H14, D16, and G170. H197 lines the Zn(2+) pocket. E200 functions as the Proton donor in the catalytic mechanism. Residue D278 participates in Zn(2+) binding. A substrate-binding site is contributed by D279.

It belongs to the metallo-dependent hydrolases superfamily. Adenosine and AMP deaminases family. Adenosine deaminase subfamily. It depends on Zn(2+) as a cofactor.

The catalysed reaction is adenosine + H2O + H(+) = inosine + NH4(+). The enzyme catalyses 2'-deoxyadenosine + H2O + H(+) = 2'-deoxyinosine + NH4(+). Functionally, catalyzes the hydrolytic deamination of adenosine and 2-deoxyadenosine. The polypeptide is Adenosine deaminase (Shewanella baltica (strain OS155 / ATCC BAA-1091)).